The chain runs to 445 residues: Lipid A 1-phosphatase (445 aa).

An N-terminal signal peptide occupies residues 1 to 22 (MNRESFLLLLVLLFALPLHLQA).

The protein resides in the periplasm. It participates in bacterial outer membrane biogenesis; LPS lipid A biosynthesis. Removes the 1-phosphate group from lipid A species. Absence of phosphate groups in lipid A renders the bacteria resistant to host-derived cationic antimicrobial peptides (CAMP) and allowing it to camouflage itself from the host innate immune response. The polypeptide is Lipid A 1-phosphatase (Porphyromonas gingivalis (strain ATCC 33277 / DSM 20709 / CIP 103683 / JCM 12257 / NCTC 11834 / 2561)).